We begin with the raw amino-acid sequence, 471 residues long: MDMNEHRNRRLKLIMISATFGGLLFGYDTGVINGALPFMARPDQLDLTPVTEGLVTSILLLGAAFGALLCGRLADRYGRRKMILNLSFLFFLASLGTALAPNVFIMAVFRFLLGLAVGGASAMVPAFLAEMAPHEKRGRMVTQNELMIVGGQFLAYVFNAILGVTMANTGHVWRYMLVICAVPAIMLFASMLKVPESPRWLISKGKNSEALRVLKQIREDKRAEAECREIQEAVEKDTALEKASLKDFSTPWLRRLLWIGIGVAIVNQITGVNSIMYYGTQILKESGFGTKAALIANIGNGLISVIAVIFGIWLVGKVRRRPILLIGLAGTTTALLLIAIFSIVLDGSMALPYVVLSLTVLFLAFMQGCVGPVTWLVIAEIFPQRLRGLGSGISVFFLWILNFVIGFAFPILLSSVGLSFTFFIFVALGVLAIGFVYKFMPETKGRTLEELEEHFRSRHDHNTPEQSVIEV.

Transmembrane regions (helical) follow at residues 13-33 (LIMI…GVIN), 50-70 (VTEG…ALLC), 88-108 (FLFF…IMAV), 111-131 (FLLG…LAEM), 146-166 (LMIV…GVTM), 175-195 (YMLV…LKVP), 256-276 (LLWI…NSIM), 295-315 (IANI…IWLV), 323-343 (ILLI…IFSI), 358-378 (LTVL…WLVI), 393-413 (ISVF…PILL), and 416-436 (VGLS…IGFV).

This sequence belongs to the major facilitator superfamily. Sugar transporter (TC 2.A.1.1) family.

The protein localises to the cell membrane. In Bacillus subtilis (strain 168), this protein is Putative metabolite transport protein YncC (yncC).